The primary structure comprises 185 residues: MSSYLRHCSSRLPGKTCSRERNNFPLRLSGGISGEGIHPGFPIRMVQYAALALSTCCFSARDMDIDAPRGVSFLGIKWLAANQTRGMWDGSTISSPHTHVFRDISRTDSFFLFFFFFASHEIGTYLSAEESALDRYLSRFCGERESWDKCKKEMVGTKGQYTGPAVPSVPTTNLNDIGDPTKTVQ.

The segment at 160–185 (QYTGPAVPSVPTTNLNDIGDPTKTVQ) is disordered.

This is an uncharacterized protein from Saccharomyces cerevisiae (strain ATCC 204508 / S288c) (Baker's yeast).